Consider the following 309-residue polypeptide: Mitochondrial import receptor subunit TOM34 (309 aa).

TPR repeat units lie at residues 9 to 42 (VEELRAAGNESFRNGQYAEASALYGRALRVLQAQ), 51 to 84 (SVLYSNRAACHLKDGNCRDCIKDCTSALALVPFS), and 86 to 118 (KPLLRRASAYEALEKYPMAYVDYKTVLQIDDSV). A Phosphoserine modification is found at Ser-160. Positions 161 to 189 (LPSENHKEMAKSKSKETTATKNRVPSAGD) are disordered. Over residues 164–178 (ENHKEMAKSKSKETT) the composition is skewed to basic and acidic residues. Phosphoserine is present on Ser-186. TPR repeat units follow at residues 193–226 (AKVLKEEGNELVKKGNHKKAIEKYSESLLCSNLE), 227–260 (SATYSNRALCYLVLKQYTEAVKDCTEALKLDGKN), and 262–294 (KAFYRRAQAHKALKDYKSSFADISNLLQIEPRN). Lys-197 participates in a covalent cross-link: Glycyl lysine isopeptide (Lys-Gly) (interchain with G-Cter in SUMO2).

It belongs to the Tom34 family. As to quaternary structure, interacts with HSP90A, VCP, ATP6V1D, KIAA0665, AMPK, and DMAP1 through its TPR repeat.

The protein localises to the cytoplasm. The protein resides in the mitochondrion outer membrane. In terms of biological role, plays a role in the import of cytosolically synthesized preproteins into mitochondria. Binds the mature portion of precursor proteins. Interacts with cellular components, and possesses weak ATPase activity. May be a chaperone-like protein that helps to keep newly synthesized precursors in an unfolded import compatible state. The chain is Mitochondrial import receptor subunit TOM34 (TOMM34) from Pongo abelii (Sumatran orangutan).